The chain runs to 605 residues: MASAKKSVDIKNIRNFSIIAHIDHGKSTLADRFIQMCGGLQDREMQAQVLDSMELERERGITIKAASVTLYYTHPNGQEYQLNFIDTPGHVDFSYEVSRSLAACEGALLVVDAAQGVEAQSVANCYTAIEQGLEVLPILNKIDLPQAEPERVIHEIEEIIGIEATDAPTCSAKTGLGVEGVLERLVDVIPAPEGDRDAPLQALIIDSWFDNYLGVVSLVRIKQGRIRKGDKMLVKSTGQVHPVTSVGVFNPKHSETDILEAGEVGFVIAGIKDIFGAPVGDTITLSSTPEVKTLPGFKKVKPQVYAGLFPIDSSDFEPFREALQKLQINDSALFFEPESSDALGFGFRCGFLGMLHMEIVQERLEREYDLDLISSAPTVVYEALTKKGDTIYIDSPSKMPDASTVEDLREPIAECHILVPQEYLGNVMTLCIERRGVQKDMKFLGNQVSVTFEIPMAEVVMDFFDKLKSCSRGFASLDYNFVRFESSSLVKVDVLINGEKVDALAMICHRQDARHRGIALVEKMKDLIPRQMFDVAIQAAIGAQVIARSTVKAMRKNVLAKCYGGDVSRKKKLLAKQKEGKKRMKQVGSVEIPQEAFLAVLKVER.

Positions 11-193 constitute a tr-type G domain; that stretch reads KNIRNFSIIA…RLVDVIPAPE (183 aa). GTP is bound by residues 23–28 and 140–143; these read DHGKST and NKID.

Belongs to the TRAFAC class translation factor GTPase superfamily. Classic translation factor GTPase family. LepA subfamily.

Its subcellular location is the cell inner membrane. It carries out the reaction GTP + H2O = GDP + phosphate + H(+). Its function is as follows. Required for accurate and efficient protein synthesis under certain stress conditions. May act as a fidelity factor of the translation reaction, by catalyzing a one-codon backward translocation of tRNAs on improperly translocated ribosomes. Back-translocation proceeds from a post-translocation (POST) complex to a pre-translocation (PRE) complex, thus giving elongation factor G a second chance to translocate the tRNAs correctly. Binds to ribosomes in a GTP-dependent manner. The chain is Elongation factor 4 from Acinetobacter baylyi (strain ATCC 33305 / BD413 / ADP1).